A 245-amino-acid polypeptide reads, in one-letter code: 1-(5-phosphoribosyl)-5-[(5-phosphoribosylamino)methylideneamino] imidazole-4-carboxamide isomerase (245 aa).

Catalysis depends on Asp-7, which acts as the Proton acceptor. Asp-129 functions as the Proton donor in the catalytic mechanism.

The protein belongs to the HisA/HisF family.

It is found in the cytoplasm. The enzyme catalyses 1-(5-phospho-beta-D-ribosyl)-5-[(5-phospho-beta-D-ribosylamino)methylideneamino]imidazole-4-carboxamide = 5-[(5-phospho-1-deoxy-D-ribulos-1-ylimino)methylamino]-1-(5-phospho-beta-D-ribosyl)imidazole-4-carboxamide. Its pathway is amino-acid biosynthesis; L-histidine biosynthesis; L-histidine from 5-phospho-alpha-D-ribose 1-diphosphate: step 4/9. The polypeptide is 1-(5-phosphoribosyl)-5-[(5-phosphoribosylamino)methylideneamino] imidazole-4-carboxamide isomerase (Shewanella amazonensis (strain ATCC BAA-1098 / SB2B)).